A 215-amino-acid polypeptide reads, in one-letter code: Octanoyltransferase (215 aa).

The 176-residue stretch at 31–206 (TDAPDEVWLV…QLVKHLDYAE (176 aa)) folds into the BPL/LPL catalytic domain. Substrate-binding positions include 70–77 (RGGQVTYH), 137–139 (SLG), and 150–152 (GLA). Catalysis depends on Cys-168, which acts as the Acyl-thioester intermediate.

The protein belongs to the LipB family.

The protein resides in the cytoplasm. The enzyme catalyses octanoyl-[ACP] + L-lysyl-[protein] = N(6)-octanoyl-L-lysyl-[protein] + holo-[ACP] + H(+). It participates in protein modification; protein lipoylation via endogenous pathway; protein N(6)-(lipoyl)lysine from octanoyl-[acyl-carrier-protein]: step 1/2. Catalyzes the transfer of endogenously produced octanoic acid from octanoyl-acyl-carrier-protein onto the lipoyl domains of lipoate-dependent enzymes. Lipoyl-ACP can also act as a substrate although octanoyl-ACP is likely to be the physiological substrate. This chain is Octanoyltransferase, found in Pseudomonas fluorescens (strain ATCC BAA-477 / NRRL B-23932 / Pf-5).